The primary structure comprises 166 residues: Methylmalonyl-CoA epimerase, mitochondrial (166 aa).

The N-terminal 23 residues, 1-23 (MFKQLIKTTLTNSRSFSTNTGSG), are a transit peptide targeting the mitochondrion. One can recognise a VOC domain in the interval 37-166 (KLNHVAIATP…NGVLVELEEK (130 aa)). Co(2+) contacts are provided by His-40, His-112, and Glu-162.

Belongs to the methylmalonyl-CoA epimerase family.

The protein localises to the mitochondrion. The enzyme catalyses (R)-methylmalonyl-CoA = (S)-methylmalonyl-CoA. Methylmalonyl-CoA epimerase involved in propionyl-CoA metabolism. This is Methylmalonyl-CoA epimerase, mitochondrial (mcee) from Dictyostelium discoideum (Social amoeba).